Reading from the N-terminus, the 272-residue chain is 2-amino-3,7-dideoxy-D-threo-hept-6-ulosonate synthase (272 aa).

Catalysis depends on Asp-33, which acts as the Proton acceptor. 1-deoxy-D-threo-hexo-2,5-diulose 6-phosphate contacts are provided by residues 33 to 37 (DHGVS) and 153 to 155 (YPR). The active-site Proton donor is the Tyr-153. Lys-184 serves as the catalytic Schiff-base intermediate with substrate. Residues 209–210 (GG) and 237–238 (GR) contribute to the 1-deoxy-D-threo-hexo-2,5-diulose 6-phosphate site.

The protein belongs to the DeoC/FbaB aldolase family. ADHS subfamily. As to quaternary structure, homodecamer.

It catalyses the reaction 1-deoxy-D-threo-hexo-2,5-diulose 6-phosphate + L-aspartate 4-semialdehyde = 2,3-dioxopropyl phosphate + 2-amino-2,3,7-trideoxy-D-lyxo-hept-6-ulosonate. Its function is as follows. Catalyzes a transaldol reaction between 6-deoxy-5-ketofructose 1-phosphate (DKFP) and L-aspartate semialdehyde (ASA) with an elimination of hydroxypyruvaldehyde phosphate to yield 2-amino-3,7-dideoxy-D-threo-hept-6-ulosonate (ADH). Plays a key role in an alternative pathway of the biosynthesis of 3-dehydroquinate (DHQ), which is involved in the canonical pathway for the biosynthesis of aromatic amino acids. The protein is 2-amino-3,7-dideoxy-D-threo-hept-6-ulosonate synthase of Methanococcus maripaludis (strain C5 / ATCC BAA-1333).